Consider the following 136-residue polypeptide: Large ribosomal subunit protein uL16 (136 aa).

This sequence belongs to the universal ribosomal protein uL16 family. As to quaternary structure, part of the 50S ribosomal subunit.

In terms of biological role, binds 23S rRNA and is also seen to make contacts with the A and possibly P site tRNAs. In Rickettsia africae (strain ESF-5), this protein is Large ribosomal subunit protein uL16.